The sequence spans 1363 residues: Neurexin-1 (1363 aa).

At 1–1287 (SKRRDMTVFS…EVIRESSSTT (1287 aa)) the chain is on the extracellular side. A glycan (N-linked (GlcNAc...) asparagine) is linked at N49. One can recognise an EGF-like 1 domain in the interval 67–105 (QSRLCAREDVCLNGGVCSVLNDQAVCDCSQTGFRGKDCS). 3 cysteine pairs are disulfide-bonded: C71/C83, C77/C92, and C94/C104. Laminin G-like domains lie at 132 to 329 (IATF…AFKC) and 336 to 528 (DPIT…KPSC). Positions 178, 195, and 263 each coordinate Ca(2+). Disulfide bonds link C293-C329, C499-C528, C536-C547, C541-C556, and C558-C568. Positions 532-569 (TAKPCLSNPCKNNGVCRDGWNRYVCDCSGTGYLGRSCE) constitute an EGF-like 2 domain. Laminin G-like domains are found at residues 574–747 (ILSY…IDYC) and 761–936 (DPVT…ERGC). N-linked (GlcNAc...) asparagine glycosylation is present at N646. Disulfide bonds link C908/C936, C943/C954, C948/C963, and C965/C975. Residues 939–976 (PSTTCQEDSCANQGVCLQQWDGFSCDCSMTSFSGPLCN) form the EGF-like 3 domain. Residues 982–1180 (YIFSKGGGQI…DANIVIEGNV (199 aa)) form the Laminin G-like 5 domain. An N-linked (GlcNAc...) asparagine glycan is attached at N1079. The interval 1244 to 1280 (CPSDDEDIDPCEPSSGGLANPTRAGGGREYPGSSEVI) is disordered. A helical membrane pass occupies residues 1288-1308 (GMVVGIVAAAALCILILLYAM). The Cytoplasmic portion of the chain corresponds to 1309–1363 (YKYRNRDEGSYHVDESRNYISNSAQSNGAVIKEKQPNSAKSSNKNKKNKDKEYYV). The tract at residues 1330–1363 (NSAQSNGAVIKEKQPNSAKSSNKNKKNKDKEYYV) is disordered.

The protein belongs to the neurexin family. As to quaternary structure, the cytoplasmic C-terminal region binds to CASK. The laminin G-like domain 1 binds to NXPH1. Specific isoforms bind to alpha-dystroglycan and to alpha-latrotoxin. N- and O-glycosylated.

The protein localises to the membrane. Its function is as follows. Neuronal cell surface protein that may be involved in cell recognition and cell adhesion. May mediate intracellular signaling. This chain is Neurexin-1 (NRXN1), found in Gallus gallus (Chicken).